We begin with the raw amino-acid sequence, 161 residues long: MKCTRETAMVKSLLLLMLGLAILREVAARKNPKAGVPALQKAGNCPPLEDNTVRVDIRIFNQNQGISVPREFQNRSSSPWDYNITRDPHRFPSEIAEAQCRHSGCINAQGQEDSTMNSVAIQQEILVLRREPQGCSNSFRLEKMLLKVGCTCVKPIVHQAA.

An N-terminal signal peptide occupies residues M1 to A28. An N-linked (GlcNAc...) asparagine glycan is attached at N83. 2 cysteine pairs are disulfide-bonded: C100–C150 and C105–C152.

The protein belongs to the IL-17 family. As to quaternary structure, homodimer; disulfide-linked. Heterodimer with IL17A (IL17A-IL17F). Forms complexes with IL17RA and IL17RC receptors with 2:1 binding stoichiometry: two receptor chains for one interleukin molecule. IL17F homodimer forms predominantly complexes with IL17RC homodimer, whereas IL17A-IL17F favors complexes with IL17RA-IL17RC. IL17RA and IL17RC chains cannot distinguish between IL17A and IL17F molecules, potentially enabling the formation of topologically distinct complexes. In terms of tissue distribution, expressed by T-helper 17 cells (Th17) (at protein level). The expression pattern reflects the differentiation state. In fully differentiated Th17 cells, IL17A-IL17F heterodimers are produced at higher levels than IL17A-IL17A and IL17F-IL17F dimers. Dominantly secreted in intestine. Expressed by resident cells of the lamina propria, both epithelial cells and immune cell subsets including natural killer cells, dendritic cells, macrophages and various T and B cell subsets. Expressed by epithelial cells and innate immune cells in the colon. Expressed in group 3 innate lymphoid cells.

The protein localises to the secreted. Functionally, effector cytokine of innate and adaptive immune system involved in antimicrobial host defense and maintenance of tissue integrity. IL17A-IL17F signals via IL17RA-IL17RC heterodimeric receptor complex, triggering homotypic interaction of IL17RA and IL17RC chains with TRAF3IP2 adapter through SEFIR domains. This leads to downstream TRAF6-mediated activation of NF-kappa-B and MAPkinase pathways ultimately resulting in transcriptional activation of cytokines, chemokines, antimicrobial peptides and matrix metalloproteinases, with potential strong immune inflammation. IL17A-IL17F is primarily involved in host defense against extracellular bacteria and fungi by inducing neutrophilic inflammation. As signature effector cytokine of T-helper 17 cells (Th17), primarily induces neutrophil activation and recruitment at infection and inflammatory sites. Stimulates the production of antimicrobial beta-defensins DEFB1, DEFB103A, and DEFB104A by mucosal epithelial cells, limiting the entry of microbes through the epithelial barriers. IL17F homodimer can signal via IL17RC homodimeric receptor complex, triggering downstream activation of TRAF6 and NF-kappa-B signaling pathway. Via IL17RC induces transcriptional activation of IL33, a potent cytokine that stimulates group 2 innate lymphoid cells and adaptive T-helper 2 cells involved in pulmonary allergic response to fungi. Likely via IL17RC, promotes sympathetic innervation of peripheral organs by coordinating the communication between gamma-delta T cells and parenchymal cells. Stimulates sympathetic innervation of thermogenic adipose tissue by driving TGFB1 expression. Regulates the composition of intestinal microbiota and immune tolerance by inducing antimicrobial proteins that specifically control the growth of commensal Firmicutes and Bacteroidetes. The polypeptide is Interleukin-17F (Il17f) (Mus musculus (Mouse)).